We begin with the raw amino-acid sequence, 118 residues long: Large ribosomal subunit protein bL19 (118 aa).

Belongs to the bacterial ribosomal protein bL19 family.

Functionally, this protein is located at the 30S-50S ribosomal subunit interface and may play a role in the structure and function of the aminoacyl-tRNA binding site. The sequence is that of Large ribosomal subunit protein bL19 from Frankia casuarinae (strain DSM 45818 / CECT 9043 / HFP020203 / CcI3).